Here is a 979-residue protein sequence, read N- to C-terminus: Receptor-type tyrosine-protein phosphatase-like N (979 aa).

The N-terminal stretch at methionine 1–alanine 34 is a signal peptide. Residues valine 35–proline 131 form an RESP18 homology domain region. The Lumenal portion of the chain corresponds to valine 35–arginine 575. Cysteines 53 and 62 form a disulfide. Basic and acidic residues-rich tracts occupy residues arginine 112 to serine 127 and arginine 304 to lysine 323. 3 disordered regions span residues arginine 112–leucine 173, serine 289–valine 329, and valine 393–proline 439. Serine 308 is subject to Phosphoserine. A compositionally biased stretch (low complexity) spans serine 415–proline 433. O-linked (GalNAc...) threonine glycosylation is present at threonine 441. Residues serine 449–arginine 575 form a sufficient for dimerization of proICA512 region. Residues asparagine 506 and asparagine 524 are each glycosylated (N-linked (GlcNAc...) asparagine). Residues serine 576 to valine 600 traverse the membrane as a helical segment. Positions arginine 601–glutamate 732 are sufficient for dimerization of proICA512. The Cytoplasmic segment spans residues arginine 601–glutamine 979. The segment at asparagine 643–glutamate 680 is disordered. The segment covering serine 652–serine 677 has biased composition (low complexity). The Tyrosine-protein phosphatase domain occupies leucine 709–glutamate 969. Lysine 754 participates in a covalent cross-link: Glycyl lysine isopeptide (Lys-Gly) (interchain with G-Cter in SUMO).

The protein belongs to the protein-tyrosine phosphatase family. Receptor class 8 subfamily. In terms of assembly, homodimer; shown for the unprocessed protein (proICA512) in the endoplasmic reticulum and resolved during protein maturation as ICA512-TMF seems to be predominantly monomeric in secretory granules; however, ICA512-CCF interacts with ICA512-TMF disrupting the ICA512-TMF:SNTB2 complex. The isolated lumenal RESP18 homology domain has been shown to form disulfide-linked homooligomers. Interacts (via cytoplasmic domain) with phosphorylated SNTB2; this protects PTPRN against cleavage by CAPN1 to produce ICA512-CCF. Dephosphorylation of SNTB2 upon insulin stimulation disrupts the interaction and results in PTPRN cleavage. Interacts with SNX19. ICA512-CCF interacts with PIAS4; in the nucleus. Interacts with STAT5B (phosphorylated); down-regulated by ICA512-CCF sumoylation; ICA512-CCF prevents STAT5B dephosphorylation; ICA512-CCF mediates interaction of STAT5B with PIAS4. Interacts (via RESP18 homology domain) with insulin and proinsulin. Interacts with PTPRN2, PTPRA and PTPRE. In terms of processing, N-glycosylated. Post-translationally, O-glycosylated with core 1 or possibly core 8 glycans. Subject to proteolytic cleavage at multiple sites. Subject to cleavage on a pair of basic residues. On exocytosis of secretory granules in pancreatic beta-cells ICA512-TMF is transiently inserted in the plasma-membrane and cleaved by mu-type calpain CPN1 to yield ICA512-CCF. In terms of processing, sumoylated at two sites including Lys-754. Sumoylation decreases interaction with STAT5. In terms of tissue distribution, expression is restricted to neuroendocrine cells. Found in pancreas, brain and pituitary.

The protein localises to the membrane. It localises to the cytoplasmic vesicle. The protein resides in the secretory vesicle membrane. It is found in the perikaryon. Its subcellular location is the cell projection. The protein localises to the axon. It localises to the synapse. The protein resides in the cell membrane. It is found in the endosome. Its subcellular location is the nucleus. In terms of biological role, plays a role in vesicle-mediated secretory processes. Required for normal accumulation of secretory vesicles in hippocampus, pituitary and pancreatic islets. Required for the accumulation of normal levels of insulin-containing vesicles and preventing their degradation. Plays a role in insulin secretion in response to glucose stimuli. Required for normal accumulation of the neurotransmitters norepinephrine, dopamine and serotonin in the brain. In females, but not in males, required for normal accumulation and secretion of pituitary hormones, such as luteinizing hormone (LH) and follicle-stimulating hormone (FSH). Required to maintain normal levels of renin expression and renin release. Seems to lack intrinsic enzyme activity. May regulate catalytic active protein-tyrosine phosphatases such as PTPRA through dimerization. ICA512-TMF regulates dynamics and exocytosis of insulin secretory granules (SGs); binding of ICA512-TMF to SNTB2/beta-2-syntrophin is proposed to restrain SGs mobility and exocytosis by tethering them to the actin cytoskeleton depending on UTRN; the function is inhibited by cytoplasmic ICA512-CFF dimerizing with ICA512-TMF and displacing SNTB2. Functionally, ICA512-CCF translocated to the nucleus promotes expression of insulin and other granule-related genes; the function implicates binding to and regulating activity of STAT5B probably by preventing its dephosphorylation and potentially by inducing its sumoylation by recruiting PIAS4. Enhances pancreatic beta-cell proliferation by converging with signaling by STAT5B and STAT3. ICA512-CCF located in the cytoplasm regulates dynamics and exocytosis of insulin secretory granules (SGs) by dimerizing with ICA512-TMF and displacing SNTB2 thus enhancing SGs mobility and exocytosis. The protein is Receptor-type tyrosine-protein phosphatase-like N (PTPRN) of Homo sapiens (Human).